A 1328-amino-acid polypeptide reads, in one-letter code: Peroxidasin homolog pxn-2 (1328 aa).

Positions 1-16 are cleaved as a signal peptide; that stretch reads MLLEFLLLIGISLSTA. An LRRNT domain is found at 17–45; sequence CPSECRCAGLDVHCEGKNLTAIPGHIPIA. Asn-34 carries N-linked (GlcNAc...) asparagine glycosylation. 6 LRR repeats span residues 42-66, 67-90, 92-114, 116-137, 138-161, and 164-191; these read IPIA…NFQA, LPNL…LLDS, PGLK…STAP, ALVS…LVSH, SPYM…FFNS, and VPTL…QFAD. The N-linked (GlcNAc...) asparagine glycan is linked to Asn-77. N-linked (GlcNAc...) asparagine glycosylation is present at Asn-220. Residues 305–332 form a disordered region; that stretch reads KKMQASSSTEPPITTTTMEPMTTSTMDS. A compositionally biased stretch (low complexity) spans 310–332; sequence SSSTEPPITTTTMEPMTTSTMDS. Ig-like C2-type domains are found at residues 346–438 and 445–532; these read PEID…FSVS and PVII…ANLL. Cysteines 373 and 422 form a disulfide. N-linked (GlcNAc...) asparagine glycans are attached at residues Asn-403 and Asn-455. A disulfide bond links Cys-466 and Cys-516. Asn-630 is a glycosylation site (N-linked (GlcNAc...) asparagine). A disulfide bond links Cys-660 and Cys-676. Residue Asp-754 coordinates heme b. His-755 acts as the Proton acceptor in catalysis. Asp-756 is a binding site for Ca(2+). Disulfide bonds link Cys-775–Cys-785 and Cys-779–Cys-807. Residue Asn-776 is glycosylated (N-linked (GlcNAc...) asparagine). Residues Thr-839, Tyr-841, Asp-843, and Ser-845 each coordinate Ca(2+). A glycan (N-linked (GlcNAc...) asparagine) is linked at Asn-894. Positions 913 and 1008 each coordinate heme b. The stretch at 1085 to 1109 is one LRR 7 repeat; it reads ALDLAALNIQRGRDHGLPSWTEYRK. Cystine bridges form between Cys-1111/Cys-1168 and Cys-1209/Cys-1236. N-linked (GlcNAc...) asparagine glycans are attached at residues Asn-1112 and Asn-1128. The stretch at 1204–1225 is one LRR 8 repeat; sequence LSKIICTNGDDIDRIQRDIFVY. N-linked (GlcNAc...) asparagine glycosylation is present at Asn-1228. Residues 1266-1297 form a disordered region; it reads IGGDEKAKRRKRRHHHSKKSCHDKGKRRKSGD. Over residues 1273–1295 the composition is skewed to basic residues; the sequence is KRRKRRHHHSKKSCHDKGKRRKS. A glycan (N-linked (GlcNAc...) asparagine) is linked at Asn-1300.

Belongs to the peroxidase family. XPO subfamily. Ca(2+) is required as a cofactor. It depends on heme b as a cofactor. Expressed in vulval muscles and in some neurons including PVQ. Expressed in the hypodermis and in coelomocytes.

The protein localises to the secreted. It is found in the extracellular space. It localises to the extracellular matrix. Its subcellular location is the basement membrane. It carries out the reaction L-lysyl-[collagen] + L-methionyl-[collagen] + H2O2 = [collagen]-L-lysyl-N-S-L-methionyl-[collagen] + 2 H2O + H(+). The catalysed reaction is bromide + H2O2 = hypobromite + H2O. It catalyses the reaction L-lysyl-[collagen] + L-methionyl-[collagen] + hypobromite = [collagen]-L-lysyl-N-S-L-methionyl-[collagen] + bromide + H2O + H(+). The enzyme catalyses L-tyrosyl-[protein] + bromide + H2O2 + H(+) = 3-bromo-L-tyrosyl-[protein] + 2 H2O. It carries out the reaction hypobromite + L-tyrosyl-[protein] + H(+) = 3-bromo-L-tyrosyl-[protein] + H2O. Functionally, catalyzes the two-electron oxidation of bromide by hydrogen peroxide and generates hypobromite as a reactive intermediate which mediates the formation of sulfilimine cross-links between methionine and hydroxylysine residues within an uncross-linked collagen IV/COL4A1 NC1 hexamer. Required for embryonic morphogenesis playing a role in epidermal elongation at the twofold stage of embryonic development. Required post-embryonically for basement membrane integrity and muscle-epidermal attachments, and specifically in the function of basement membrane components such as the type IV collagens. May have a role in inhibiting axon regeneration. May functionally antagonize the peroxidasin pxn-1. In Caenorhabditis elegans, this protein is Peroxidasin homolog pxn-2.